Reading from the N-terminus, the 337-residue chain is UDP-3-O-acylglucosamine N-acyltransferase 1 (337 aa).

Catalysis depends on histidine 238, which acts as the Proton acceptor.

This sequence belongs to the transferase hexapeptide repeat family. LpxD subfamily. Homotrimer.

The catalysed reaction is a UDP-3-O-[(3R)-3-hydroxyacyl]-alpha-D-glucosamine + a (3R)-hydroxyacyl-[ACP] = a UDP-2-N,3-O-bis[(3R)-3-hydroxyacyl]-alpha-D-glucosamine + holo-[ACP] + H(+). It functions in the pathway bacterial outer membrane biogenesis; LPS lipid A biosynthesis. In terms of biological role, catalyzes the N-acylation of UDP-3-O-acylglucosamine using 3-hydroxyacyl-ACP as the acyl donor. Is involved in the biosynthesis of lipid A, a phosphorylated glycolipid that anchors the lipopolysaccharide to the outer membrane of the cell. The protein is UDP-3-O-acylglucosamine N-acyltransferase 1 of Koribacter versatilis (strain Ellin345).